The following is a 258-amino-acid chain: Ribosomal protein L11 methyltransferase (258 aa).

The S-adenosyl-L-methionine site is built by Thr117, Gly138, Asp160, and Asn201.

It belongs to the methyltransferase superfamily. PrmA family.

Its subcellular location is the cytoplasm. The catalysed reaction is L-lysyl-[protein] + 3 S-adenosyl-L-methionine = N(6),N(6),N(6)-trimethyl-L-lysyl-[protein] + 3 S-adenosyl-L-homocysteine + 3 H(+). In terms of biological role, methylates ribosomal protein L11. In Thermosipho melanesiensis (strain DSM 12029 / CIP 104789 / BI429), this protein is Ribosomal protein L11 methyltransferase.